We begin with the raw amino-acid sequence, 315 residues long: Ribosomal RNA small subunit methyltransferase H (315 aa).

S-adenosyl-L-methionine is bound by residues 37 to 39, Asp-57, Phe-83, Asp-105, and Gln-112; that span reads GGH.

The protein belongs to the methyltransferase superfamily. RsmH family.

It localises to the cytoplasm. It carries out the reaction cytidine(1402) in 16S rRNA + S-adenosyl-L-methionine = N(4)-methylcytidine(1402) in 16S rRNA + S-adenosyl-L-homocysteine + H(+). Specifically methylates the N4 position of cytidine in position 1402 (C1402) of 16S rRNA. The chain is Ribosomal RNA small subunit methyltransferase H from Pseudomonas putida (strain GB-1).